The chain runs to 823 residues: Putative E3 ubiquitin-protein ligase RF4 (823 aa).

Disordered regions lie at residues 24–72 (TVSP…NGSV), 224–291 (SKLS…CSGS), and 432–464 (ESVTLIPSASEKKSDSSIPSTSEKKSGSESEEK). The span at 61–72 (KPQNHLSGNGSV) shows a compositional bias: polar residues. The span at 224–240 (SKLSDSESLGAESNPPK) shows a compositional bias: low complexity. Residues 267-282 (FPNTPNSKKTQSSGTT) show a composition bias toward polar residues. Residues 453–464 (SEKKSGSESEEK) show a composition bias toward basic and acidic residues. The stretch at 536–738 (ELKALRKERE…ELKLKSDYSR (203 aa)) forms a coiled coil. The RING-type zinc-finger motif lies at 768–808 (CVMCLSEEMSVIFLPCAHQVLCFKCNQLHEKEGMMDCPSCR).

This sequence belongs to the RING-type zinc finger family.

It catalyses the reaction S-ubiquitinyl-[E2 ubiquitin-conjugating enzyme]-L-cysteine + [acceptor protein]-L-lysine = [E2 ubiquitin-conjugating enzyme]-L-cysteine + N(6)-ubiquitinyl-[acceptor protein]-L-lysine.. Its pathway is protein modification; protein ubiquitination. In Arabidopsis thaliana (Mouse-ear cress), this protein is Putative E3 ubiquitin-protein ligase RF4 (RF4).